We begin with the raw amino-acid sequence, 535 residues long: MRSLLLFTFSACVLLARALLAGGASSGGGDTGPGNRRREREALAAQKIEVLVLLPRDDSYLFSLARVRPAIEYALRSVEGNGTGRKLLPPGTRFQVAYEDSDCGNRALFSLVDRVAAARGAKPDLILGPVCEYAAAPVARLASHWDLPMLSAGALAAGFQHKDTEYSHLTRVAPAYAKMGEMMLALFRHHHWSRAALLYSDDKLERNCYFTLEGVHEVFQEEGLHTSAYNFDETKDLDLDDIVRYIQGSERVVIMCASGDTIRRIMLAVHRHGMTSGDYAFFNIELFNSSSYGDGSWKRGDKHDFEAKQAYSSLQTVTLLRTAKPEFEKFSMEVKSSVEKQGLNEEDYVNMFVEGFHDAILLYVLALHEVLRAGYSKKDGGKIIQQTWNRTFEGIAGQVSIDANGDRYGDFSVVAMTDTEAGTQEVIGDYFGKEGRFKMRSNVKYPWGSLKLRIDETRIVEHTNSSPCKSCGLEESAVTGIVVGALLGAGLLMAFYFFRKKYRITIERRNHQEESNIGKHRELREDSIRSHFSVA.

The first 26 residues, methionine 1–serine 26, serve as a signal peptide directing secretion. Residues glycine 27–arginine 40 constitute a propeptide that is removed on maturation. The Extracellular segment spans residues glutamate 41 to alanine 477. A glycan (N-linked (GlcNAc...) asparagine) is linked at asparagine 81. Intrachain disulfides connect cysteine 103–cysteine 131 and cysteine 208–cysteine 256. N-linked (GlcNAc...) asparagine glycosylation is found at asparagine 288 and asparagine 389. The helical transmembrane segment at valine 478 to phenylalanine 498 threads the bilayer. The Cytoplasmic portion of the chain corresponds to arginine 499–alanine 535.

Belongs to the ANF receptor family. As to quaternary structure, homodimer; disulfide-linked. Interacts with OSTN.

The protein localises to the cell membrane. In terms of biological role, receptor for the natriuretic peptide hormones, binding with similar affinities atrial natriuretic peptide NPPA/ANP, brain natriuretic peptide NPPB/BNP, and C-type natriuretic peptide NPPC/CNP. May function as a clearance receptor for NPPA, NPPB and NPPC, regulating their local concentrations and effects. Acts as a regulator of osteoblast differentiation and bone growth by binding to its ligand osteocrin, thereby preventing binding between NPR3/NPR-C and natriuretic peptides, leading to increase cGMP production. The sequence is that of Atrial natriuretic peptide receptor 3 (Npr3) from Rattus norvegicus (Rat).